The chain runs to 252 residues: MSRAHPKQPVTGRNIPILAITMPALKLLCLHGAGMNSEIMKSHLSSLAKTLEYRNIAQFAYAEGSVETEPGPGITPGLYEGPYYSFHIWPPKAGNLQDEESIQNAYEELLEIIDDEGPFDGLLGFSHGGSFLAELLARYARDNPATDVERLARCAVFINSFPPFRNDPDQNPIIDYELLKHFPKIPTLHVVGTSDFVHEYSTILYEKLHQKAPTSTGLVTHSKGHEIPRDPKVLDKVVAGFEKLNFAVSFSH.

Serine 126 acts as the Charge relay system in catalysis.

It belongs to the LovG family.

The protein operates within secondary metabolite biosynthesis. In terms of biological role, hydrolase; part of the gene cluster that mediates the biosynthesis of the antihypercholesterolemic agents phomoidrides which are dimeric anhydrides. Within the pathway, phiM releases the C12-fatty acyl chain from phiA. The pathway begins with the highly reducing polyketide synthase tstA that catalyzes the formation of a C12-fatty acyl-ACP, starting from one acetate and 5 malonate units. The hydrolase tstM is involved in the release of the C12-fatty acyl chain from phiA. The alkylcitrate synthase (ACS) tstJ and the alkylcitrate dehydratase (ACDH) tstI then give rise to decarboxylated monomeric anhydrides by coupling the C12-fatty acyl chain with oxalacetic acid. The cyclase tstC is responsible for the dimerization of the monomeric anhydrides which leads to the production of prephomoidride that contains the characteristic bicyclo[4.3.1]deca-1,6-diene system of phomoidrides. Iterative oxidation catalyzed by the alpha-ketoglutarate-dependent dioxygenase tstK produced then phomoidride A. Finally, the methyltransferase tstE converts phomoidride A to phomoidride B via an acetalization reaction. The phosphatidylethanolamine-binding protein tstB and tstN are not essential for dimerization and their functions have still to be determined. This chain is Hydrolase phiM, found in Talaromyces stipitatus (strain ATCC 10500 / CBS 375.48 / QM 6759 / NRRL 1006) (Penicillium stipitatum).